The following is a 205-amino-acid chain: Methylthioribulose-1-phosphate dehydratase (205 aa).

Zn(2+) is bound by residues H94 and H96.

This sequence belongs to the aldolase class II family. MtnB subfamily. Requires Zn(2+) as cofactor.

The enzyme catalyses 5-(methylsulfanyl)-D-ribulose 1-phosphate = 5-methylsulfanyl-2,3-dioxopentyl phosphate + H2O. It participates in amino-acid biosynthesis; L-methionine biosynthesis via salvage pathway; L-methionine from S-methyl-5-thio-alpha-D-ribose 1-phosphate: step 2/6. Functionally, catalyzes the dehydration of methylthioribulose-1-phosphate (MTRu-1-P) into 2,3-diketo-5-methylthiopentyl-1-phosphate (DK-MTP-1-P). The protein is Methylthioribulose-1-phosphate dehydratase of Pectobacterium atrosepticum (strain SCRI 1043 / ATCC BAA-672) (Erwinia carotovora subsp. atroseptica).